The primary structure comprises 717 residues: Radial spoke head protein 6 homolog A (717 aa).

Disordered regions lie at residues Met-1 to Gln-65, Ser-503 to Asn-523, Thr-563 to Gly-588, and Gly-672 to Asp-717. Acidic residues-rich tracts occupy residues Ser-503–Gly-513, Glu-564–Gln-585, and Thr-700–Asp-717.

The protein belongs to the flagellar radial spoke RSP4/6 family. Component of the axonemal radial spoke 1 (RS1) and 2 (RS2) complexes, at least composed of spoke head proteins RSPH1, RSPH3, RSPH9 and the cilia-specific component RSPH4A or sperm-specific component RSPH6A, spoke stalk proteins RSPH14, DNAJB13, DYDC1, ROPN1L and NME5, and the RS1 complex-specific anchor protein IQUB. Interacts with RSPH1. Interacts with RSPH3B. Interacts with RSPH4A. Interacts with RSPH9. Interacts with RSPH10B. Phosphorylated by PKA. Phosphorylation increases in capacitated sperm.

It is found in the cytoplasm. The protein resides in the cytoskeleton. Its subcellular location is the flagellum axoneme. In terms of biological role, functions as part of radial spoke complexes in the axoneme of sperm flagella that play an important part in motility. The triple radial spokes (RS1, RS2 and RS3) are required to modulate beating of the sperm flagellum. The chain is Radial spoke head protein 6 homolog A from Homo sapiens (Human).